We begin with the raw amino-acid sequence, 92 residues long: DNA-directed RNA polymerase subunit Rpo11 (92 aa).

The protein belongs to the archaeal Rpo11/eukaryotic RPB11/RPC19 RNA polymerase subunit family. Part of the 13-subunit RNA polymerase complex.

The protein localises to the cytoplasm. It carries out the reaction RNA(n) + a ribonucleoside 5'-triphosphate = RNA(n+1) + diphosphate. Functionally, DNA-dependent RNA polymerase (RNAP) catalyzes the transcription of DNA into RNA using the four ribonucleoside triphosphates as substrates. The polypeptide is DNA-directed RNA polymerase subunit Rpo11 (Saccharolobus shibatae (strain ATCC 51178 / DSM 5389 / JCM 8931 / NBRC 15437 / B12) (Sulfolobus shibatae)).